The sequence spans 942 residues: Nuclear receptor coactivator 7 (942 aa).

Residue Met-1 is modified to N-acetylmethionine. Over residues Met-1 to Gln-12 the composition is skewed to basic and acidic residues. A disordered region spans residues Met-1 to Asn-46. A coiled-coil region spans residues Lys-4–Glu-29. A compositionally biased stretch (polar residues) spans Lys-25–Thr-38. Ser-89 is modified (phosphoserine). Positions Met-114 to Val-157 constitute a LysM domain. Residue Thr-134 is modified to Phosphothreonine. The disordered stretch occupies residues Asn-161–Asp-188. A compositionally biased stretch (low complexity) spans Ser-162–Ser-183. 5 positions are modified to phosphoserine: Ser-179, Ser-183, Ser-208, Ser-209, and Ser-211. The disordered stretch occupies residues Lys-324–Phe-416. Polar residues predominate over residues Gly-356–Ser-368. Residues Glu-369–Ser-381 are compositionally biased toward basic and acidic residues. Phosphoserine is present on residues Ser-441, Ser-500, and Ser-502. The 162-residue stretch at Ala-781–Asp-942 folds into the TLDc domain.

The protein belongs to the OXR1 family. As to quaternary structure, interacts with ESR1, ESR2A, ESR2B, THRB, PPARG and RARA in a ligand-inducible manner. Interacts with the heterodimer AHR-ARNT. In terms of tissue distribution, highly expressed in brain. Weakly expressed in mammary gland, ovary, uterus, prostate, stomach, bladder, spinal cord and pancreas. Expressed in cancer cell line.

The protein localises to the nucleus. Its function is as follows. Enhances the transcriptional activities of several nuclear receptors. Involved in the coactivation of different nuclear receptors, such as ESR1, THRB, PPARG and RARA. This is Nuclear receptor coactivator 7 (NCOA7) from Homo sapiens (Human).